The primary structure comprises 440 residues: Nuclear hormone receptor family member nhr-130 (440 aa).

A DNA-binding region (nuclear receptor) is located at residues 34 to 110; it reads LYTCQVCALP…VGMDPGRFQF (77 aa). 2 NR C4-type zinc fingers span residues 37–57 and 74–93; these read CQVC…CRAC and CKKQ…CKKC. Residues 184-439 form the NR LBD domain; that stretch reads EKPLIARNNL…FSHPEMFEDT (256 aa).

Belongs to the nuclear hormone receptor family.

The protein resides in the nucleus. Functionally, orphan nuclear receptor. This chain is Nuclear hormone receptor family member nhr-130 (nhr-130), found in Caenorhabditis elegans.